The sequence spans 98 residues: Small ribosomal subunit protein bS20 (98 aa).

Residues 76–98 (HPNNGARKKSRLASKLKPIEQTA) form a disordered region.

This sequence belongs to the bacterial ribosomal protein bS20 family.

Binds directly to 16S ribosomal RNA. The polypeptide is Small ribosomal subunit protein bS20 (Trichormus variabilis (strain ATCC 29413 / PCC 7937) (Anabaena variabilis)).